The chain runs to 974 residues: Hexokinase-1 (974 aa).

Residues methionine 1–leucine 42 are disordered. The segment at cysteine 57–glutamate 66 is mitochondrial-binding peptide (MBP). 2 Hexokinase domains span residues proline 72 to alanine 514 and alanine 520 to alanine 962. Residues arginine 86 and aspartate 140–serine 145 each bind ATP. The interval aspartate 129–valine 263 is hexokinase small subdomain 1. Aspartate 140–arginine 147 provides a ligand contact to D-glucose 6-phosphate. D-glucose is bound by residues serine 211, threonine 228–lysine 229, and asparagine 264–aspartate 265. The hexokinase large subdomain 1 stretch occupies residues asparagine 264–serine 503. D-glucose 6-phosphate contacts are provided by aspartate 265 and threonine 288. Residues asparagine 291, glutamate 316, and glutamine 347–glutamate 350 each bind D-glucose. Serine 393 carries the phosphoserine modification. Position 469-471 (aspartate 469–serine 471) interacts with D-glucose 6-phosphate. Position 481-482 (arginine 481–arginine 482) interacts with ATP. D-glucose 6-phosphate is bound by residues serine 505 and aspartate 588 to threonine 592. Residues aspartate 577 to valine 711 are hexokinase small subdomain 2. Aspartate 588 to asparagine 593 contacts ATP. D-glucose is bound by residues serine 659–phenylalanine 660, threonine 676–lysine 677, and asparagine 712–aspartate 713. Residues asparagine 712–aspartate 951 are hexokinase large subdomain 2. D-glucose 6-phosphate is bound by residues aspartate 713 and threonine 736. Residue threonine 736 coordinates ATP. D-glucose is bound by residues serine 738–asparagine 739, glutamate 764, and glutamate 798. ATP contacts are provided by residues glycine 803–methionine 804, threonine 840–serine 844, and threonine 919–leucine 923. Residues aspartate 917–threonine 919 and serine 953 each bind D-glucose 6-phosphate.

It belongs to the hexokinase family. Monomer. Interacts with RABL2/RABL2A; binds preferentially to GTP-bound RABL2. Interacts with VDAC1. The HK1-VDAC1 complex interacts with ATF2. Interacts (via N-terminal spermatogenic cell-specific region) with PFKM isoform 2 and isoform 3 (via C-terminus). Interacts with SMAD5. Tyrosine-phosphorylated. As to expression, in rapidly growing tumor cells exhibiting high glucose catabolic rates, isoform HK1 is markedly elevated. Isoform HK1-SA, isoform HK1-SB and isoform HK1-SC are found only in spermatogenic cells. Isoform HK1-SC is detected in round spermatids, condensing spermatids and mature sperm where it is found in the head membranes, mitochondria of the midpiece and the fibrous sheath of the flagellum. Expressed within the principal piece and midpiece of sperm tail (at protein level).

Its subcellular location is the mitochondrion outer membrane. It localises to the cytoplasm. It is found in the cytosol. The protein localises to the membrane. It carries out the reaction a D-hexose + ATP = a D-hexose 6-phosphate + ADP + H(+). The enzyme catalyses D-fructose + ATP = D-fructose 6-phosphate + ADP + H(+). It catalyses the reaction D-glucose + ATP = D-glucose 6-phosphate + ADP + H(+). The catalysed reaction is D-mannose + ATP = D-mannose 6-phosphate + ADP + H(+). It carries out the reaction D-glucosamine + ATP = D-glucosamine 6-phosphate + ADP + H(+). It functions in the pathway carbohydrate metabolism; hexose metabolism. The protein operates within carbohydrate degradation; glycolysis; D-glyceraldehyde 3-phosphate and glycerone phosphate from D-glucose: step 1/4. With respect to regulation, hexokinase is an allosteric enzyme inhibited by its product D-glucose 6-phosphate. Hexokinase activity is inhibited by N-acetyl-D-glucosamine. Catalyzes the phosphorylation of various hexoses, such as D-glucose, D-glucosamine, D-fructose, D-mannose and 2-deoxy-D-glucose, to hexose 6-phosphate (D-glucose 6-phosphate, D-glucosamine 6-phosphate, D-fructose 6-phosphate, D-mannose 6-phosphate and 2-deoxy-D-glucose 6-phosphate, respectively). Does not phosphorylate N-acetyl-D-glucosamine. Mediates the initial step of glycolysis by catalyzing phosphorylation of D-glucose to D-glucose 6-phosphate. Involved in innate immunity and inflammation by acting as a pattern recognition receptor for bacterial peptidoglycan. When released in the cytosol, N-acetyl-D-glucosamine component of bacterial peptidoglycan inhibits the hexokinase activity of HK1 and causes its dissociation from mitochondrial outer membrane, thereby activating the NLRP3 inflammasome. This is Hexokinase-1 from Mus musculus (Mouse).